The primary structure comprises 87 residues: Small ribosomal subunit protein bS18 (87 aa).

Belongs to the bacterial ribosomal protein bS18 family. As to quaternary structure, part of the 30S ribosomal subunit. Forms a tight heterodimer with protein bS6.

Functionally, binds as a heterodimer with protein bS6 to the central domain of the 16S rRNA, where it helps stabilize the platform of the 30S subunit. This chain is Small ribosomal subunit protein bS18, found in Nitratidesulfovibrio vulgaris (strain DSM 19637 / Miyazaki F) (Desulfovibrio vulgaris).